We begin with the raw amino-acid sequence, 145 residues long: Actin-depolymerizing factor 2 (145 aa).

The 133-residue stretch at 13–145 (GMGVAPDIRD…DLEVLRERAH (133 aa)) folds into the ADF-H domain.

It belongs to the actin-binding proteins ADF family.

Its function is as follows. Actin-depolymerizing protein. Severs actin filaments (F-actin) and binds to actin monomers. In Oryza sativa subsp. japonica (Rice), this protein is Actin-depolymerizing factor 2 (ADF2).